A 205-amino-acid chain; its full sequence is Octanoyltransferase (205 aa).

The region spanning 30–205 (NSSDELVWLL…ILKKEFYKIF (176 aa)) is the BPL/LPL catalytic domain. Substrate-binding positions include 68–75 (RGGKYTYH), 140–142 (AFG), and 153–155 (GIA). Cysteine 171 (acyl-thioester intermediate) is an active-site residue.

It belongs to the LipB family.

The protein localises to the cytoplasm. The enzyme catalyses octanoyl-[ACP] + L-lysyl-[protein] = N(6)-octanoyl-L-lysyl-[protein] + holo-[ACP] + H(+). It functions in the pathway protein modification; protein lipoylation via endogenous pathway; protein N(6)-(lipoyl)lysine from octanoyl-[acyl-carrier-protein]: step 1/2. In terms of biological role, catalyzes the transfer of endogenously produced octanoic acid from octanoyl-acyl-carrier-protein onto the lipoyl domains of lipoate-dependent enzymes. Lipoyl-ACP can also act as a substrate although octanoyl-ACP is likely to be the physiological substrate. This is Octanoyltransferase from Wolbachia sp. subsp. Brugia malayi (strain TRS).